Reading from the N-terminus, the 445-residue chain is Methionine aminopeptidase 2-1 (445 aa).

A disordered region spans residues 1–99 (MAAQVPTEAL…FPNKAYPKGE (99 aa)). Basic residues predominate over residues 61 to 75 (KKKKKRKPKKKKKHP). His-198 serves as a coordination point for substrate. The a divalent metal cation site is built by Asp-218, Asp-229, and His-298. Residue His-306 coordinates substrate. Positions 331 and 426 each coordinate a divalent metal cation.

The protein belongs to the peptidase M24A family. Methionine aminopeptidase eukaryotic type 2 subfamily. The cofactor is Co(2+). Zn(2+) is required as a cofactor. Mn(2+) serves as cofactor. Requires Fe(2+) as cofactor.

It localises to the cytoplasm. The catalysed reaction is Release of N-terminal amino acids, preferentially methionine, from peptides and arylamides.. Cotranslationally removes the N-terminal methionine from nascent proteins. The N-terminal methionine is often cleaved when the second residue in the primary sequence is small and uncharged (Met-Ala-, Cys, Gly, Pro, Ser, Thr, or Val). This chain is Methionine aminopeptidase 2-1, found in Fusarium vanettenii (strain ATCC MYA-4622 / CBS 123669 / FGSC 9596 / NRRL 45880 / 77-13-4) (Fusarium solani subsp. pisi).